Here is a 192-residue protein sequence, read N- to C-terminus: Peptidyl-tRNA hydrolase (192 aa).

Tyr-17 provides a ligand contact to tRNA. Catalysis depends on His-22, which acts as the Proton acceptor. Tyr-68, Asn-70, and Asn-116 together coordinate tRNA.

Belongs to the PTH family. In terms of assembly, monomer.

Its subcellular location is the cytoplasm. The enzyme catalyses an N-acyl-L-alpha-aminoacyl-tRNA + H2O = an N-acyl-L-amino acid + a tRNA + H(+). In terms of biological role, hydrolyzes ribosome-free peptidyl-tRNAs (with 1 or more amino acids incorporated), which drop off the ribosome during protein synthesis, or as a result of ribosome stalling. Functionally, catalyzes the release of premature peptidyl moieties from peptidyl-tRNA molecules trapped in stalled 50S ribosomal subunits, and thus maintains levels of free tRNAs and 50S ribosomes. The chain is Peptidyl-tRNA hydrolase from Mycobacterium sp. (strain JLS).